Reading from the N-terminus, the 270-residue chain is MRLTVVGANGRMGRELITAIRQRKDVELCAVLVRKNSPFVGKDASVLIGSDSLGIRITDDPENAFSSTEGIVDFSHPQASLLYADYAAQKKLVHIIGTTGFSKTEEEKIAEFAKYTTIVKSGNMSLGINLLANLVKKAAKALEADDFDIEIYEMHHANKVDAPSGTALLLGQAAAEGRNVMLQDVRINERNGYTGKREKGSIGFSCSRGGTVIGEHSVIFAGSHERIVLSHTAQERSIFANGALKAASWAKNHANGLYSMLDVLGLNDQF.

7 to 12 is a binding site for NAD(+); sequence GANGRM. Arg-34 is an NADP(+) binding site. Residues 97–99 and 121–124 each bind NAD(+); these read GTT and SGNM. Residue His-155 is the Proton donor/acceptor of the active site. His-156 lines the (S)-2,3,4,5-tetrahydrodipicolinate pocket. Residue Lys-159 is the Proton donor of the active site. 165 to 166 is a (S)-2,3,4,5-tetrahydrodipicolinate binding site; that stretch reads GT.

It belongs to the DapB family.

The protein localises to the cytoplasm. The enzyme catalyses (S)-2,3,4,5-tetrahydrodipicolinate + NAD(+) + H2O = (2S,4S)-4-hydroxy-2,3,4,5-tetrahydrodipicolinate + NADH + H(+). It carries out the reaction (S)-2,3,4,5-tetrahydrodipicolinate + NADP(+) + H2O = (2S,4S)-4-hydroxy-2,3,4,5-tetrahydrodipicolinate + NADPH + H(+). It functions in the pathway amino-acid biosynthesis; L-lysine biosynthesis via DAP pathway; (S)-tetrahydrodipicolinate from L-aspartate: step 4/4. In terms of biological role, catalyzes the conversion of 4-hydroxy-tetrahydrodipicolinate (HTPA) to tetrahydrodipicolinate. The sequence is that of 4-hydroxy-tetrahydrodipicolinate reductase from Bartonella tribocorum (strain CIP 105476 / IBS 506).